The chain runs to 229 residues: Prolactin (229 aa).

An N-terminal signal peptide occupies residues Met-1 to Ser-30. The cysteines at positions 34 and 41 are disulfide-linked. Phosphoserine occurs at positions 56, 64, and 120. Disulfide bonds link Cys-88/Cys-204 and Cys-221/Cys-229.

This sequence belongs to the somatotropin/prolactin family. Interacts with PRLR.

Its subcellular location is the secreted. In terms of biological role, prolactin acts primarily on the mammary gland by promoting lactation. The polypeptide is Prolactin (PRL) (Capra hircus (Goat)).